The chain runs to 86 residues: Small ribosomal subunit protein uS17 (86 aa).

The protein belongs to the universal ribosomal protein uS17 family. In terms of assembly, part of the 30S ribosomal subunit.

In terms of biological role, one of the primary rRNA binding proteins, it binds specifically to the 5'-end of 16S ribosomal RNA. This is Small ribosomal subunit protein uS17 from Nitrosococcus oceani (strain ATCC 19707 / BCRC 17464 / JCM 30415 / NCIMB 11848 / C-107).